A 175-amino-acid polypeptide reads, in one-letter code: Large ribosomal subunit protein uL10 (175 aa).

Belongs to the universal ribosomal protein uL10 family. Part of the ribosomal stalk of the 50S ribosomal subunit. The N-terminus interacts with L11 and the large rRNA to form the base of the stalk. The C-terminus forms an elongated spine to which L12 dimers bind in a sequential fashion forming a multimeric L10(L12)X complex.

Functionally, forms part of the ribosomal stalk, playing a central role in the interaction of the ribosome with GTP-bound translation factors. The polypeptide is Large ribosomal subunit protein uL10 (Methylobacterium sp. (strain 4-46)).